We begin with the raw amino-acid sequence, 478 residues long: MATDSWALAVDEQEAAVKSMTNLQIKEEKVKADTNGIIKTSTTAEKTDEEEKEDRAAQSLLNKLIRSNLVDNTNQVEVLQRDPNSPLYSVKSFEELRLKPQLLQGVYAMGFNRPSKIQENALPMMLAEPPQNLIAQSQSGTGKTAAFVLAMLSRVEPSDRYPQCLCLSPTYELALQTGKVIEQMGKFYPELKLAYAVRGNKLERGQKISEQIVIGTPGTVLDWCSKLKFIDPKKIKVFVLDEADVMIATQGHQDQSIRIQRMLPRNCQMLLFSATFEDSVWKFAQKVVPDPNVIKLKREEETLDTIKQYYVLCSSRDEKFQALCNLYGAITIAQAMIFCHTRKTASWLAAELSKEGHQVALLSGEMMVEQRAAVIERFREGKEKVLVTTNVCARGIDVEQVSVVINFDLPVDKDGNPDNETYLHRIGRTGRFGKRGLAVNMVDSKHSMNILNRIQEHFNKKIERLDTDDLDEIEKIAN.

Alanine 2 bears the N-acetylalanine mark. The tract at residues 2-299 is N-terminal lobe; that stretch reads ATDSWALAVD…DPNVIKLKRE (298 aa). Lysine 26 is covalently cross-linked (Glycyl lysine isopeptide (Lys-Gly) (interchain with G-Cter in SUMO1); alternate). Lysine 26 participates in a covalent cross-link: Glycyl lysine isopeptide (Lys-Gly) (interchain with G-Cter in SUMO2); alternate. The residue at position 42 (threonine 42) is a Phosphothreonine. Residues 54–67 are N-terminal helix; that stretch reads DRAAQSLLNKLIRS. A Q motif motif is present at residues 91–119; that stretch reads KSFEELRLKPQLLQGVYAMGFNRPSKIQE. ATP contacts are provided by residues glutamine 118 and 137-144; that span reads SQSGTGKT. Residues 124–294 enclose the Helicase ATP-binding domain; sequence MMLAEPPQNL…QKVVPDPNVI (171 aa). The short motif at 241–244 is the DEAD box element; sequence DEAD. The tract at residues 300-478 is C-terminal lobe; the sequence is EETLDTIKQY…DLDEIEKIAN (179 aa). Residues 305 to 473 enclose the Helicase C-terminal domain; sequence TIKQYYVLCS…RLDTDDLDEI (169 aa). Arginine 428 and arginine 431 together coordinate ATP.

This sequence belongs to the DEAD box helicase family. DDX19/DBP5 subfamily.

Its subcellular location is the cytoplasm. The protein localises to the nucleus. It is found in the nucleoplasm. The enzyme catalyses ATP + H2O = ADP + phosphate + H(+). Functionally, ATP-dependent RNA helicase involved in mRNA export from the nucleus. Rather than unwinding RNA duplexes, DDX19 functions as a remodeler of ribonucleoprotein particles, whereby proteins bound to nuclear mRNA are dissociated and replaced by cytoplasmic mRNA binding proteins. The chain is ATP-dependent RNA helicase DDX19A (DDX19A) from Homo sapiens (Human).